A 185-amino-acid chain; its full sequence is UPF0397 protein PAM_019 (185 aa).

5 helical membrane passes run 13–33 (IGLSAAIFFVLSCFASIPVGF), 42–62 (AFLAFIAVAFGPAVGFYVGLI), 69–89 (FILFGNVSWNWVLCSALIGFI), 109–129 (IVYFWLYQVAFNFIIWGFFAP), and 143–163 (VYLQSFLIVISNILAYSVVGI).

The protein belongs to the UPF0397 family.

Its subcellular location is the cell membrane. The polypeptide is UPF0397 protein PAM_019 (Onion yellows phytoplasma (strain OY-M)).